Reading from the N-terminus, the 131-residue chain is M-zodatoxin-Lt8o (131 aa).

An N-terminal signal peptide occupies residues 1–20 (MKYFVVALALVAAFACIAES). A propeptide spanning residues 21 to 60 (KPAESEHELAEVEEENELADLEDAVWLEHLADLSDLEEAR) is cleaved from the precursor.

The protein belongs to the cationic peptide 06 (cytoinsectotoxin) family. In terms of tissue distribution, expressed by the venom gland.

It is found in the secreted. Functionally, insecticidal, cytolytic and antimicrobial peptide. Forms voltage-dependent, ion-permeable channels in membranes. At high concentration causes cell membrane lysis. This Lachesana tarabaevi (Spider) protein is M-zodatoxin-Lt8o (cit 1-14).